A 150-amino-acid chain; its full sequence is Endoribonuclease YbeY (150 aa).

Zn(2+) contacts are provided by histidine 102, histidine 106, and histidine 112.

This sequence belongs to the endoribonuclease YbeY family. Requires Zn(2+) as cofactor.

It is found in the cytoplasm. In terms of biological role, single strand-specific metallo-endoribonuclease involved in late-stage 70S ribosome quality control and in maturation of the 3' terminus of the 16S rRNA. The polypeptide is Endoribonuclease YbeY (Thermotoga sp. (strain RQ2)).